An 88-amino-acid polypeptide reads, in one-letter code: Phosphocarrier protein HPr (88 aa).

In terms of domain architecture, HPr spans 1-88; the sequence is MKTQQFTVID…TLLTEMGLAQ (88 aa). The active-site Pros-phosphohistidine intermediate is the His-15. Ser-46 carries the phosphoserine; by HPrK/P modification.

The protein belongs to the HPr family.

It localises to the cytoplasm. With respect to regulation, phosphorylation on Ser-46 inhibits the phosphoryl transfer from enzyme I to HPr. Its function is as follows. General (non sugar-specific) component of the phosphoenolpyruvate-dependent sugar phosphotransferase system (sugar PTS). This major carbohydrate active-transport system catalyzes the phosphorylation of incoming sugar substrates concomitantly with their translocation across the cell membrane. The phosphoryl group from phosphoenolpyruvate (PEP) is transferred to the phosphoryl carrier protein HPr by enzyme I. Phospho-HPr then transfers it to the PTS EIIA domain. Functionally, P-Ser-HPr interacts with the catabolite control protein A (CcpA), forming a complex that binds to DNA at the catabolite response elements cre, operator sites preceding a large number of catabolite-regulated genes. Thus, P-Ser-HPr is a corepressor in carbon catabolite repression (CCR), a mechanism that allows bacteria to coordinate and optimize the utilization of available carbon sources. P-Ser-HPr also plays a role in inducer exclusion, in which it probably interacts with several non-PTS permeases and inhibits their transport activity. This Lysinibacillus sphaericus (Bacillus sphaericus) protein is Phosphocarrier protein HPr (ptsH).